Consider the following 204-residue polypeptide: Large ribosomal subunit protein eL15z (204 aa).

Residues 161–204 (LRGLTSEGKKNRGLRGKGHNNHKNRPSRRATWKKNNSLSLRRYR) are disordered. The segment covering 171–192 (NRGLRGKGHNNHKNRPSRRATW) has biased composition (basic residues). Positions 193-204 (KKNNSLSLRRYR) are enriched in polar residues.

This sequence belongs to the eukaryotic ribosomal protein eL15 family.

The sequence is that of Large ribosomal subunit protein eL15z (RPL15A) from Arabidopsis thaliana (Mouse-ear cress).